The primary structure comprises 191 residues: Glutathione S-transferase Y-2 (191 aa).

Residues T2–E80 enclose the GST N-terminal domain. Positions T85 to M191 constitute a GST C-terminal domain.

This sequence belongs to the GST superfamily.

It catalyses the reaction RX + glutathione = an S-substituted glutathione + a halide anion + H(+). In terms of biological role, conjugation of reduced glutathione to a wide number of exogenous and endogenous hydrophobic electrophiles. The protein is Glutathione S-transferase Y-2 (GSTY2) of Pichia kudriavzevii (Yeast).